Reading from the N-terminus, the 160-residue chain is MLTHLDSQGRANMVDVTEKAVTSREATAEAVVRMRPETLQLIQDGGHPKGDVFAVARIAGIQAAKRTHELIPLCHPLLLTSVKVELQAEAPDAVRIRARCRLAGQTGVEMEALTAASVAALTIYDMCKAVDRGMLIEQVQLLEKLGGKSGHYRKEEEGQA.

Residues 73–75 (LCH) and 110–111 (ME) each bind substrate. The active site involves Asp125.

The protein belongs to the MoaC family. In terms of assembly, homohexamer; trimer of dimers.

The catalysed reaction is (8S)-3',8-cyclo-7,8-dihydroguanosine 5'-triphosphate = cyclic pyranopterin phosphate + diphosphate. It functions in the pathway cofactor biosynthesis; molybdopterin biosynthesis. Its function is as follows. Catalyzes the conversion of (8S)-3',8-cyclo-7,8-dihydroguanosine 5'-triphosphate to cyclic pyranopterin monophosphate (cPMP). The polypeptide is Cyclic pyranopterin monophosphate synthase (Pseudomonas paraeruginosa (strain DSM 24068 / PA7) (Pseudomonas aeruginosa (strain PA7))).